We begin with the raw amino-acid sequence, 833 residues long: Ribosome biogenesis protein BOP1 homolog (833 aa).

Residues 20-202 (NKKSEPIAVS…DSDDSSEDES (183 aa)) are disordered. Residues 36 to 56 (SKPTTTATTTVSKSPVSTITT) are compositionally biased toward low complexity. Acidic residues-rich tracts occupy residues 90 to 111 (SEDDEDYESEEDDEGDDEEDVE) and 136 to 150 (EAEESLVEYQSEDDS). The span at 154–170 (SSKSSSSTTTTTTTTKK) shows a compositional bias: low complexity. Residues 182-192 (KQWTNDPNQFY) are compositionally biased toward polar residues. A compositionally biased stretch (acidic residues) spans 193 to 202 (DSDDSSEDES). 3 WD repeats span residues 331 to 370 (TKAIRMGWIKLNKKGKKGEKDKKDGNFDLWADEGEEKEKT), 488 to 527 (GHKARVRSISISPNGQWLASGSDDCTIKIWEVSSTRCLYS), and 529 to 569 (EVES…TQTE). Positions 568 to 592 (TEHSPETEKILTKPPTDSSTEQQQN) are disordered. Residues 582–592 (PTDSSTEQQQN) show a composition bias toward polar residues. WD repeat units lie at residues 618-660 (HHPF…TQSP), 663-701 (KSKTPNQVTRFHPNKPIFFVADQNIIRVYDLMKQELIKK), 704-743 (TGCRYISSIDIHPQGDNVIMGGYDKKVCWFDLDLSVRPYK), 747-786 (YHKMAVRKVIYHPTLPLFASCSDDLSIHVFHGMVYDDLLQ), and 802-833 (INDLGVLDIVFHPKQPWIFSSGADSTIRLYTN).

This sequence belongs to the WD repeat BOP1/ERB1 family.

It is found in the nucleus. Its subcellular location is the nucleolus. The protein localises to the nucleoplasm. Required for maturation of ribosomal RNAs and formation of the large ribosomal subunit. This is Ribosome biogenesis protein BOP1 homolog from Dictyostelium discoideum (Social amoeba).